A 316-amino-acid polypeptide reads, in one-letter code: Nucleoside diphosphate-linked moiety X motif 6 (316 aa).

One can recognise a Nudix hydrolase domain in the interval 141-273; the sequence is SHQVGVAGAV…TSRVARLLLY (133 aa). Residues 176-197 carry the Nudix box motif; it reads GLSEPEEDIGDTAVREVFEETG.

Belongs to the Nudix hydrolase family. As to quaternary structure, monomer and homodimer. As to expression, detected in liver, kidney and esophagus (at protein level). Ubiquitous.

The protein localises to the cytoplasm. Its subcellular location is the nucleus. It is found in the mitochondrion. In terms of biological role, may contribute to the regulation of cell proliferation. In Homo sapiens (Human), this protein is Nucleoside diphosphate-linked moiety X motif 6 (NUDT6).